Reading from the N-terminus, the 409-residue chain is Argininosuccinate synthase (409 aa).

Residues 10–18 (AYSGGLDTS) and alanine 37 each bind ATP. 2 residues coordinate L-citrulline: tyrosine 90 and serine 95. Residue glycine 120 participates in ATP binding. L-aspartate contacts are provided by threonine 122, asparagine 126, and aspartate 127. An L-citrulline-binding site is contributed by asparagine 126. L-citrulline contacts are provided by arginine 130, serine 182, serine 191, glutamate 267, and tyrosine 279.

Belongs to the argininosuccinate synthase family. Type 1 subfamily. Homotetramer.

It localises to the cytoplasm. The catalysed reaction is L-citrulline + L-aspartate + ATP = 2-(N(omega)-L-arginino)succinate + AMP + diphosphate + H(+). It participates in amino-acid biosynthesis; L-arginine biosynthesis; L-arginine from L-ornithine and carbamoyl phosphate: step 2/3. The chain is Argininosuccinate synthase from Thiobacillus denitrificans (strain ATCC 25259 / T1).